The primary structure comprises 370 residues: Protein commissureless 1 (370 aa).

The Extracellular portion of the chain corresponds to 1 to 136 (MISTTDYPTV…DADMHVIINY (136 aa)). The tract at residues 108–131 (LRDRSEESGESSWWSQIFGDADMH) is required for vesicular localization. The chain crosses the membrane as a helical span at residues 137 to 157 (LWIGVVSSLVILSLVFILFSC). Topologically, residues 158–370 (YFYRKFRTWK…CASLVVVVAA (213 aa)) are cytoplasmic. 2 consecutive short sequence motifs (PY-motif) follow at residues 220–223 (PPCY) and 229–232 (LPSY). The segment at 227–237 (TGLPSYDEALH) is interaction with Nedd4. The tract at residues 287-312 (VEEDKADSSSSTSASASPSSSESSNL) is disordered. The span at 294-312 (SSSSTSASASPSSSESSNL) shows a compositional bias: low complexity.

Belongs to the commissureless family. Interacts (probably via PY-motifs) with Nedd4 (via WW2 domain). Interacts with Robo. Ubiquitinated by Nedd4; which promotes endocytosis of the comm/robo complex and comm proteasomal degradation. Not ubiquitinated by Nedd4.

The protein resides in the cytoplasmic vesicle membrane. The protein localises to the cell membrane. Its function is as follows. Controls axon guidance across the CNS midline by preventing the delivery of Robo to the growth cone. This Drosophila melanogaster (Fruit fly) protein is Protein commissureless 1.